Reading from the N-terminus, the 262-residue chain is Acyl-[acyl-carrier-protein]--UDP-N-acetylglucosamine O-acyltransferase (262 aa).

It belongs to the transferase hexapeptide repeat family. LpxA subfamily. Homotrimer.

The protein localises to the cytoplasm. The enzyme catalyses a (3R)-hydroxyacyl-[ACP] + UDP-N-acetyl-alpha-D-glucosamine = a UDP-3-O-[(3R)-3-hydroxyacyl]-N-acetyl-alpha-D-glucosamine + holo-[ACP]. It participates in glycolipid biosynthesis; lipid IV(A) biosynthesis; lipid IV(A) from (3R)-3-hydroxytetradecanoyl-[acyl-carrier-protein] and UDP-N-acetyl-alpha-D-glucosamine: step 1/6. In terms of biological role, involved in the biosynthesis of lipid A, a phosphorylated glycolipid that anchors the lipopolysaccharide to the outer membrane of the cell. This chain is Acyl-[acyl-carrier-protein]--UDP-N-acetylglucosamine O-acyltransferase, found in Salmonella dublin (strain CT_02021853).